We begin with the raw amino-acid sequence, 420 residues long: Histidine--tRNA ligase (420 aa).

This sequence belongs to the class-II aminoacyl-tRNA synthetase family. Homodimer.

The protein resides in the cytoplasm. It carries out the reaction tRNA(His) + L-histidine + ATP = L-histidyl-tRNA(His) + AMP + diphosphate + H(+). The sequence is that of Histidine--tRNA ligase from Staphylococcus saprophyticus subsp. saprophyticus (strain ATCC 15305 / DSM 20229 / NCIMB 8711 / NCTC 7292 / S-41).